A 290-amino-acid chain; its full sequence is Probable prolyl 4-hydroxylase 8 (290 aa).

Residues 1-19 (MAKKPKQLRNKPRKSFSTQ) are Cytoplasmic-facing. A helical; Signal-anchor for type II membrane protein membrane pass occupies residues 20–40 (TFTVVVLVLFVILILVGLGIF). Topologically, residues 41-290 (SLPSTNKTSS…TKWFHVHEYN (250 aa)) are lumenal. A glycan (N-linked (GlcNAc...) asparagine) is linked at Asn46. The Fe2OG dioxygenase domain maps to 163 to 286 (NGEGLQVLHY…KWSSTKWFHV (124 aa)). Residues His181 and Asp183 each coordinate Fe cation. The N-linked (GlcNAc...) asparagine glycan is linked to Asn222. Position 267 (His267) interacts with Fe cation. A 2-oxoglutarate-binding site is contributed by Lys277.

It belongs to the P4HA family. Fe(2+) serves as cofactor. Requires L-ascorbate as cofactor.

It localises to the endoplasmic reticulum membrane. The catalysed reaction is L-prolyl-[collagen] + 2-oxoglutarate + O2 = trans-4-hydroxy-L-prolyl-[collagen] + succinate + CO2. Its function is as follows. Catalyzes the post-translational formation of 4-hydroxyproline in -Xaa-Pro-Gly- sequences in proline-rich peptide sequences of plant glycoproteins and other proteins. Hydroxyprolines are important constituent of many plant cell wall glycoproteins such as extensins, hydroxyproline-rich glycoproteins, lectins and arabinogalactan proteins. The sequence is that of Probable prolyl 4-hydroxylase 8 from Arabidopsis thaliana (Mouse-ear cress).